We begin with the raw amino-acid sequence, 184 residues long: Ribosome-recycling factor (184 aa).

This sequence belongs to the RRF family.

Its subcellular location is the cytoplasm. Functionally, responsible for the release of ribosomes from messenger RNA at the termination of protein biosynthesis. May increase the efficiency of translation by recycling ribosomes from one round of translation to another. This is Ribosome-recycling factor from Leptospira interrogans serogroup Icterohaemorrhagiae serovar copenhageni (strain Fiocruz L1-130).